Here is a 405-residue protein sequence, read N- to C-terminus: Aspartic protease (405 aa).

The signal sequence occupies residues Met1 to Ala21. The propeptide at Ala22–Arg81 is removed in mature form. The Peptidase A1 domain occupies Trp97 to Ala402. Residue Asp113 is part of the active site. A disulfide bridge links Cys126 with Cys131. Residue Asp290 is part of the active site. The cysteines at positions 332 and 366 are disulfide-linked.

It belongs to the peptidase A1 family.

It is found in the secreted. Inhibited by pepstatin A. In terms of biological role, possesses acidic protease activity. Hydrolyzes casein and azoalbumin in vitro. The protein is Aspartic protease of Phaffia rhodozyma (Yeast).